The sequence spans 225 residues: Ribonuclease 3 (225 aa).

The RNase III domain occupies 7–129 (IPRLCRTLGY…IIGAIYLDSE (123 aa)). Residue Glu-42 participates in Mg(2+) binding. Asp-46 is an active-site residue. Mg(2+) contacts are provided by Asp-115 and Glu-118. Glu-118 is an active-site residue. The DRBM domain maps to 155–225 (DPKTLLQEHL…AAQVLELMKK (71 aa)).

It belongs to the ribonuclease III family. As to quaternary structure, homodimer. It depends on Mg(2+) as a cofactor.

It localises to the cytoplasm. It catalyses the reaction Endonucleolytic cleavage to 5'-phosphomonoester.. In terms of biological role, digests double-stranded RNA. Involved in the processing of primary rRNA transcript to yield the immediate precursors to the large and small rRNAs (23S and 16S). Processes some mRNAs, and tRNAs when they are encoded in the rRNA operon. Processes pre-crRNA and tracrRNA of type II CRISPR loci if present in the organism. This chain is Ribonuclease 3, found in Shewanella halifaxensis (strain HAW-EB4).